Consider the following 598-residue polypeptide: Arginine--tRNA ligase (598 aa).

Positions 131–141 (ANPTGPMHVGH) match the 'HIGH' region motif. Residues 288–309 (KLPPPKSKKGQPPPQAQPDEEG) are disordered.

The protein belongs to the class-I aminoacyl-tRNA synthetase family. Monomer.

The protein resides in the cytoplasm. The enzyme catalyses tRNA(Arg) + L-arginine + ATP = L-arginyl-tRNA(Arg) + AMP + diphosphate. This is Arginine--tRNA ligase from Anaeromyxobacter dehalogenans (strain 2CP-C).